A 215-amino-acid chain; its full sequence is 3-isopropylmalate dehydratase small subunit (215 aa).

The protein belongs to the LeuD family. LeuD type 1 subfamily. In terms of assembly, heterodimer of LeuC and LeuD.

It carries out the reaction (2R,3S)-3-isopropylmalate = (2S)-2-isopropylmalate. The protein operates within amino-acid biosynthesis; L-leucine biosynthesis; L-leucine from 3-methyl-2-oxobutanoate: step 2/4. Its function is as follows. Catalyzes the isomerization between 2-isopropylmalate and 3-isopropylmalate, via the formation of 2-isopropylmaleate. This Xanthomonas oryzae pv. oryzae (strain MAFF 311018) protein is 3-isopropylmalate dehydratase small subunit.